Here is a 122-residue protein sequence, read N- to C-terminus: Putative MOB kinase activator-like 2B (122 aa).

Residues H69 and H74 each coordinate Zn(2+).

The protein belongs to the MOB1/phocein family.

It is found in the nucleus. The protein localises to the cytoplasm. The protein resides in the cytoskeleton. Its subcellular location is the phragmoplast. In Arabidopsis thaliana (Mouse-ear cress), this protein is Putative MOB kinase activator-like 2B.